We begin with the raw amino-acid sequence, 137 residues long: Phosphoribosyl-AMP cyclohydrolase (137 aa).

Asp-84 contributes to the Mg(2+) binding site. A Zn(2+)-binding site is contributed by Cys-85. Mg(2+)-binding residues include Asp-86 and Asp-88. Residues Cys-101 and Cys-108 each coordinate Zn(2+).

It belongs to the PRA-CH family. As to quaternary structure, homodimer. It depends on Mg(2+) as a cofactor. Zn(2+) is required as a cofactor.

Its subcellular location is the cytoplasm. It catalyses the reaction 1-(5-phospho-beta-D-ribosyl)-5'-AMP + H2O = 1-(5-phospho-beta-D-ribosyl)-5-[(5-phospho-beta-D-ribosylamino)methylideneamino]imidazole-4-carboxamide. Its pathway is amino-acid biosynthesis; L-histidine biosynthesis; L-histidine from 5-phospho-alpha-D-ribose 1-diphosphate: step 3/9. In terms of biological role, catalyzes the hydrolysis of the adenine ring of phosphoribosyl-AMP. The sequence is that of Phosphoribosyl-AMP cyclohydrolase from Pelodictyon phaeoclathratiforme (strain DSM 5477 / BU-1).